The chain runs to 490 residues: Gram-negative bacteria-binding protein 3 (490 aa).

Positions 1–25 (MADALRFVAWSCCLQLLFLLLGVQG) are cleaved as a signal peptide. One can recognise a CBM39 domain in the interval 26–126 (YEVPKAKIDV…GSFVVNGYSG (101 aa)). The GH16 domain maps to 162–490 (TEVNGAPTRC…KIDYVKVYSL (329 aa)). N-linked (GlcNAc...) asparagine glycosylation is found at Asn-362 and Asn-373.

It belongs to the insect beta-1,3-glucan binding protein family.

The protein localises to the secreted. Involved in the recognition of invading microorganisms. Binds specifically to beta-1,3-glucan and activates the phenoloxidase cascade. This is Gram-negative bacteria-binding protein 3 from Drosophila melanogaster (Fruit fly).